Consider the following 311-residue polypeptide: Putative ABC transporter ATP-binding protein MG467 (311 aa).

The ABC transporter domain occupies 84 to 310; the sequence is ITINKMWKNV…IVSNQLVRPL (227 aa). 122-129 provides a ligand contact to ATP; the sequence is GSSGSGKT.

It belongs to the ABC transporter superfamily.

This chain is Putative ABC transporter ATP-binding protein MG467, found in Mycoplasma genitalium (strain ATCC 33530 / DSM 19775 / NCTC 10195 / G37) (Mycoplasmoides genitalium).